A 152-amino-acid chain; its full sequence is Clitocypin-2 (152 aa).

This sequence belongs to the protease inhibitor I48 family. In terms of assembly, homodimer. In terms of tissue distribution, expressed in all analyzed tissues, but expression was higher in the pileus and in the lower part of the stipe.

Its function is as follows. Binds and inhibits cysteine proteinases. Inhibits most strongly papain and cathepsin L, more weakly bromelain and cathepsin B while it is completely ineffective against cathepsin H. The sequence is that of Clitocypin-2 (clt2) from Clitocybe nebularis (Clouded agaric).